We begin with the raw amino-acid sequence, 375 residues long: Dual specificity protein phosphatase 4 (375 aa).

A Rhodanese domain is found at 25–143 (SGGRCLLLDC…FASEYPEFCA (119 aa)). The Tyrosine-protein phosphatase domain maps to 176–317 (GPVEILPFLY…LLQFESQVLA (142 aa)). The active-site Phosphocysteine intermediate is C261.

Belongs to the protein-tyrosine phosphatase family. Non-receptor class dual specificity subfamily.

It is found in the nucleus. It catalyses the reaction O-phospho-L-tyrosyl-[protein] + H2O = L-tyrosyl-[protein] + phosphate. The catalysed reaction is O-phospho-L-seryl-[protein] + H2O = L-seryl-[protein] + phosphate. It carries out the reaction O-phospho-L-threonyl-[protein] + H2O = L-threonyl-[protein] + phosphate. Regulates mitogenic signal transduction by dephosphorylating both Thr and Tyr residues on MAP kinases ERK1 and ERK2. This Gallus gallus (Chicken) protein is Dual specificity protein phosphatase 4 (DUSP4).